A 118-amino-acid chain; its full sequence is Small ribosomal subunit protein uS13 (118 aa).

The interval 91–118 is disordered; it reads HRRSLPVRGQRTKTNARTRKGPRKPIKA.

It belongs to the universal ribosomal protein uS13 family. In terms of assembly, part of the 30S ribosomal subunit. Forms a loose heterodimer with protein S19. Forms two bridges to the 50S subunit in the 70S ribosome.

Its function is as follows. Located at the top of the head of the 30S subunit, it contacts several helices of the 16S rRNA. In the 70S ribosome it contacts the 23S rRNA (bridge B1a) and protein L5 of the 50S subunit (bridge B1b), connecting the 2 subunits; these bridges are implicated in subunit movement. Contacts the tRNAs in the A and P-sites. This chain is Small ribosomal subunit protein uS13, found in Francisella tularensis subsp. tularensis (strain FSC 198).